The chain runs to 362 residues: Beta-ketoacyl-[acyl-carrier-protein] synthase III 2 (362 aa).

Active-site residues include C113 and H251. Positions 252–256 (QANIR) are ACP-binding. The active site involves N281.

Belongs to the thiolase-like superfamily. FabH family. Homodimer.

It is found in the cytoplasm. It catalyses the reaction malonyl-[ACP] + acetyl-CoA + H(+) = 3-oxobutanoyl-[ACP] + CO2 + CoA. It functions in the pathway lipid metabolism; fatty acid biosynthesis. Functionally, catalyzes the condensation reaction of fatty acid synthesis by the addition to an acyl acceptor of two carbons from malonyl-ACP. Catalyzes the first condensation reaction which initiates fatty acid synthesis and may therefore play a role in governing the total rate of fatty acid production. Possesses both acetoacetyl-ACP synthase and acetyl transacylase activities. Its substrate specificity determines the biosynthesis of branched-chain and/or straight-chain of fatty acids. This Vibrio vulnificus (strain CMCP6) protein is Beta-ketoacyl-[acyl-carrier-protein] synthase III 2.